The following is a 397-amino-acid chain: Argininosuccinate synthase (397 aa).

ATP is bound at residue 9 to 17; the sequence is AYSGGLDTS. Tyr-87 provides a ligand contact to L-citrulline. Gly-117 is a binding site for ATP. L-aspartate is bound by residues Thr-119, Asn-123, and Asp-124. Asn-123 is an L-citrulline binding site. Residues Arg-127, Ser-175, Ser-184, Glu-257, and Tyr-269 each coordinate L-citrulline.

This sequence belongs to the argininosuccinate synthase family. Type 1 subfamily. As to quaternary structure, homotetramer.

The protein resides in the cytoplasm. The enzyme catalyses L-citrulline + L-aspartate + ATP = 2-(N(omega)-L-arginino)succinate + AMP + diphosphate + H(+). It functions in the pathway amino-acid biosynthesis; L-arginine biosynthesis; L-arginine from L-ornithine and carbamoyl phosphate: step 2/3. The polypeptide is Argininosuccinate synthase (Dictyoglomus turgidum (strain DSM 6724 / Z-1310)).